Consider the following 586-residue polypeptide: BTB/POZ domain and ankyrin repeat-containing protein NPR1 (586 aa).

The BTB domain maps to Ser63 to Pro139. The C2HC NPR-type zinc finger occupies Val142 to Arg156. Cys145, Cys150, His152, and Cys155 together coordinate Zn(2+). ANK repeat units follow at residues Lys266–Glu296, Asn298–Leu325, and Arg329–Glu358. The tract at residues Glu388–Pro522 is salicylic acid-binding core (SBC). Residue Arg433 participates in salicylate binding. The tract at residues Asn561–Pro586 is disordered. Positions Leu562–Ser573 are enriched in low complexity.

This sequence belongs to the plant 'ANKYRIN-BTB/POZ' family. 'NPR1-like' subfamily. As to expression, highly expressed in leaves. Expressed at low levels in roots and stems.

The protein resides in the cytoplasm. The protein localises to the nucleus. Its subcellular location is the nuclear body. Its pathway is protein modification; protein ubiquitination. Functionally, salicylic acid (SA)-binding substrate-specific adapter of an E3 ubiquitin-protein ligase complex (CUL3-RBX1-BTB) which mediates the ubiquitination and subsequent proteasomal degradation of target proteins. Transcription cofactor that represses gene expression in the absence of salicylic acid (SA), when attached to negative cis-elements (W-box) with WRKY transcription factors, but stimulates gene expression upon activation by SA, when sumoylated and attached to positive cis-elements (as-1) with TGA transcription factors, thus confering immunity through a series of gene regulations ending in a significant increase in antimicrobial and defense genes expression. Probable component of the salicylic acid (SA) defense signaling pathway and pathogen-induced systemic acquired resistance (SAR). May be involved in disease resistance against fungal pathogens. May be involved in tolerance to salt and osmotic stresses. This Malus hupehensis (Chinese crab apple) protein is BTB/POZ domain and ankyrin repeat-containing protein NPR1.